We begin with the raw amino-acid sequence, 232 residues long: Adenosylcobinamide-GDP ribazoletransferase (232 aa).

6 helical membrane passes run 32-52 (PIYF…GGSF), 54-74 (NFLL…LFHF), 102-122 (VGPF…TLYL), 126-146 (PITF…LMFF), 172-192 (FFLL…VVTV), and 212-232 (DVLG…LGVV).

This sequence belongs to the CobS family. Mg(2+) serves as cofactor.

The protein resides in the cell inner membrane. The enzyme catalyses alpha-ribazole + adenosylcob(III)inamide-GDP = adenosylcob(III)alamin + GMP + H(+). The catalysed reaction is alpha-ribazole 5'-phosphate + adenosylcob(III)inamide-GDP = adenosylcob(III)alamin 5'-phosphate + GMP + H(+). The protein operates within cofactor biosynthesis; adenosylcobalamin biosynthesis; adenosylcobalamin from cob(II)yrinate a,c-diamide: step 7/7. Joins adenosylcobinamide-GDP and alpha-ribazole to generate adenosylcobalamin (Ado-cobalamin). Also synthesizes adenosylcobalamin 5'-phosphate from adenosylcobinamide-GDP and alpha-ribazole 5'-phosphate. This chain is Adenosylcobinamide-GDP ribazoletransferase, found in Thermosipho melanesiensis (strain DSM 12029 / CIP 104789 / BI429).